The primary structure comprises 376 residues: Transmembrane protein 183A (376 aa).

2 disordered regions span residues 1 to 20 (MARG…AMPK) and 100 to 127 (MDAQ…ELDG). Residues 300–320 (LNFIFIPIVMGMIFTLFTINV) traverse the membrane as a helical segment.

Belongs to the TMEM183 family.

The protein localises to the membrane. This Homo sapiens (Human) protein is Transmembrane protein 183A (TMEM183A).